Reading from the N-terminus, the 268-residue chain is Esterase GME11355 (268 aa).

Residues Ser122, Asp212, and His240 each act as charge relay system in the active site.

It belongs to the LovG family.

Its pathway is secondary metabolite biosynthesis. In terms of biological role, esterase; part of the gene cluster that mediates the biosynthesis of dibenzodioxocinones such as pestalotiollide B, a novel class of inhibitors against cholesterol ester transfer protein (CEPT). The biosynthesis initiates from condensation of acetate and malonate units catalyzed by the non-reducing PKS pks8/GME11356. Pks8/GME11356 lacks a thioesterase (TE) domain, which is important to the cyclizing of the third ring of atrochrysone carboxylic acid, and the esterase GME11355 might play the role of TE and catalyzes the cyclization reaction of the C ring. The lactamase-like protein GME11357 (or other beta-lactamases in Pestalotiopsis microspora) probably hydrolyzes the thioester bond between the ACP of pks8/GME11356 and the intermediate to release atrochrysone carboxylic acid, which is spontaneously dehydrates to form endocrocin anthrone. Endocrocin anthrone is further converted to emodin via the endocrocin intermediate. Emodin is then oxidized by several enzymes such as the Baeyer-Villiger oxidase GME11358, the oxidoreductase GME11367, the short chain dehydrogenase/reductase GME11373, as well as by other oxidoreductases from the cluster, to modify the A and C rings and open the B ring, and finally yield monodictyphenone. The prenyltransferase GME11375 may catalyze the addition reaction between the C5 side chains and the carbon bone of dibenzodioxocinones. The remaining biochemical reactions to the final product dibenzodioxocinones should be methylation catalyzed by methyltransferase GME11366 and reduction and lactonization reaction catalyzed by a series of oxidordeuctases. This Pestalotiopsis microspora protein is Esterase GME11355.